Reading from the N-terminus, the 391-residue chain is MFEVKHMDGIDVFFFMWAASLIFFMKAGFIALEIGQFRAKNVSYHCVLKLLDLAAVFIAYLFIGYGISYGFENIMPLITGTFDADLGAWWMKMVMFAAAAVTIITGGVAERIKILPYFIGALIVGGILYPIVEHLVWGGGFANLGINFHDYAGSGAVHLFGGLVGLMAAYVLGPRIDKYINGKPQAIPGHNIPIAVLGAFILAFGWYGFNIGSASGIANGVELASVAMATTMALAGGIIGGALSSRNDPLYTANGMCAGLVAVCSGVDLFTPIGAFIVGLLAGIQQPFTYKFIEEKLKIDDVCAIGPVHAMSGLIGVICAGIPFLLKADAVSKVSITGQIIGAIVIALIAIVGGLIIYKGLDLTIGLRVSEEAEKVGLDTAILQTTAYSEE.

10 helical membrane-spanning segments follow: residues Val-12 to Leu-32, Leu-51 to Phe-71, Ala-88 to Val-108, Ile-112 to Val-132, Ala-152 to Leu-172, Ile-192 to Gly-212, Leu-223 to Leu-243, Val-261 to Leu-281, Ile-305 to Leu-325, and Gly-338 to Tyr-358.

The protein belongs to the ammonia transporter channel (TC 1.A.11.2) family. As to quaternary structure, homotrimer. Interacts and forms a complex with GlnK1.

The protein localises to the cell membrane. Activity is regulated by the nitrogen regulatory protein GlnK1 via direct interaction. Formation of the GlnK1/Amt1 complex is decreased in the presence of Mg-ATP or 2-oxoglutarate. The presence of both effectors abolishes the formation of the complex. In terms of biological role, involved in the uptake of ammonium/ammonia (NH(4)(+)/NH(3)). Transport is electrogenic. The sequence is that of Ammonium transporter Amt1 from Methanocaldococcus jannaschii (strain ATCC 43067 / DSM 2661 / JAL-1 / JCM 10045 / NBRC 100440) (Methanococcus jannaschii).